Here is a 431-residue protein sequence, read N- to C-terminus: tRNA(Ile)-lysidine synthase (431 aa).

25 to 30 (SGGPDS) lines the ATP pocket.

Belongs to the tRNA(Ile)-lysidine synthase family.

Its subcellular location is the cytoplasm. It carries out the reaction cytidine(34) in tRNA(Ile2) + L-lysine + ATP = lysidine(34) in tRNA(Ile2) + AMP + diphosphate + H(+). In terms of biological role, ligates lysine onto the cytidine present at position 34 of the AUA codon-specific tRNA(Ile) that contains the anticodon CAU, in an ATP-dependent manner. Cytidine is converted to lysidine, thus changing the amino acid specificity of the tRNA from methionine to isoleucine. The sequence is that of tRNA(Ile)-lysidine synthase from Lactobacillus johnsonii (strain CNCM I-12250 / La1 / NCC 533).